The primary structure comprises 227 residues: Cleavage and polyadenylation specificity factor subunit 5 (227 aa).

N-acetylserine is present on serine 2. The tract at residues serine 2 to asparagine 147 is necessary for RNA-binding. Arginine 15 bears the Omega-N-methylarginine mark. 2 positions are modified to N6-acetyllysine: lysine 23 and lysine 29. Position 40 is a phosphotyrosine (tyrosine 40). At lysine 56 the chain carries N6-acetyllysine. Residues methionine 76–leucine 201 form the Nudix hydrolase domain. A necessary for interactions with PAPOLA and PABPN1 region spans residues glutamate 81 to tyrosine 160. The segment at threonine 102 to phenylalanine 104 is interaction with RNA. Residues glycine 109–glycine 130 carry the Nudix box motif.

Belongs to the Nudix hydrolase family. CPSF5 subfamily. As to quaternary structure, homodimer (via N- and C-terminus); binds RNA as homodimer. Component of the cleavage factor Im (CFIm) complex which is a heterotetramer composed of two subunits of NUDT21/CPSF5 and two subunits of CPSF6 or CPSF7 or a heterodimer of CPSF6 and CPSF7. The cleavage factor Im (CFIm) complex associates with the CPSF and CSTF complexes to promote the assembly of the core mRNA 3'-processing machinery. Interacts with CPSF6 (via the RRM domain); this interaction is direct and enhances binding to RNA. Interacts with CPSF7. Interacts with FIP1L1; this interaction occurs in a RNA sequence-specific manner. Interacts with PABPN1. Interacts (via N-terminus) with PAPOLA (via C-terminus); this interaction is direct and diminished by acetylation. Interacts with SNRNP70. Interacts with VIRMA. Post-translationally, acetylated mainly by p300/CBP, recruited to the complex by CPSF6. Acetylation decreases interaction with PAPAO. Deacetylated by the class I/II HDACs, HDAC1, HDAC3 and HDAC10, and by the class III HDACs, SIRT1 and SIRT2.

The protein localises to the nucleus. The protein resides in the cytoplasm. Component of the cleavage factor Im (CFIm) complex that functions as an activator of the pre-mRNA 3'-end cleavage and polyadenylation processing required for the maturation of pre-mRNA into functional mRNAs. CFIm contributes to the recruitment of multiprotein complexes on specific sequences on the pre-mRNA 3'-end, so called cleavage and polyadenylation signals (pA signals). Most pre-mRNAs contain multiple pA signals, resulting in alternative cleavage and polyadenylation (APA) producing mRNAs with variable 3'-end formation. The CFIm complex acts as a key regulator of cleavage and polyadenylation site choice during APA through its binding to 5'-UGUA-3' elements localized in the 3'-untranslated region (UTR) for a huge number of pre-mRNAs. NUDT21/CPSF5 activates indirectly the mRNA 3'-processing machinery by recruiting CPSF6 and/or CPSF7. Binds to 5'-UGUA-3' elements localized upstream of pA signals that act as enhancers of pre-mRNA 3'-end processing. The homodimer mediates simultaneous sequence-specific recognition of two 5'-UGUA-3' elements within the pre-mRNA. Plays a role in somatic cell fate transitions and pluripotency by regulating widespread changes in gene expression through an APA-dependent function. Binds to chromatin. Binds to, but does not hydrolyze mono- and di-adenosine nucleotides. This is Cleavage and polyadenylation specificity factor subunit 5 (NUDT21) from Bos taurus (Bovine).